Reading from the N-terminus, the 484-residue chain is Protein nucleotidyltransferase YdiU (484 aa).

ATP contacts are provided by Gly81, Gly83, Arg84, Lys103, Asp115, Gly116, Arg166, and Arg173. Catalysis depends on Asp244, which acts as the Proton acceptor. Mg(2+) is bound by residues Asn245 and Asp254. Residue Asp254 coordinates ATP.

The protein belongs to the SELO family. It depends on Mg(2+) as a cofactor. Requires Mn(2+) as cofactor.

It carries out the reaction L-seryl-[protein] + ATP = 3-O-(5'-adenylyl)-L-seryl-[protein] + diphosphate. The catalysed reaction is L-threonyl-[protein] + ATP = 3-O-(5'-adenylyl)-L-threonyl-[protein] + diphosphate. It catalyses the reaction L-tyrosyl-[protein] + ATP = O-(5'-adenylyl)-L-tyrosyl-[protein] + diphosphate. The enzyme catalyses L-histidyl-[protein] + UTP = N(tele)-(5'-uridylyl)-L-histidyl-[protein] + diphosphate. It carries out the reaction L-seryl-[protein] + UTP = O-(5'-uridylyl)-L-seryl-[protein] + diphosphate. The catalysed reaction is L-tyrosyl-[protein] + UTP = O-(5'-uridylyl)-L-tyrosyl-[protein] + diphosphate. Functionally, nucleotidyltransferase involved in the post-translational modification of proteins. It can catalyze the addition of adenosine monophosphate (AMP) or uridine monophosphate (UMP) to a protein, resulting in modifications known as AMPylation and UMPylation. The protein is Protein nucleotidyltransferase YdiU of Shewanella sp. (strain MR-4).